The chain runs to 158 residues: NAD(P)H-quinone oxidoreductase subunit J, chloroplastic (158 aa).

It belongs to the complex I 30 kDa subunit family. NDH is composed of at least 16 different subunits, 5 of which are encoded in the nucleus.

The protein localises to the plastid. The protein resides in the chloroplast thylakoid membrane. The catalysed reaction is a plastoquinone + NADH + (n+1) H(+)(in) = a plastoquinol + NAD(+) + n H(+)(out). It catalyses the reaction a plastoquinone + NADPH + (n+1) H(+)(in) = a plastoquinol + NADP(+) + n H(+)(out). Functionally, NDH shuttles electrons from NAD(P)H:plastoquinone, via FMN and iron-sulfur (Fe-S) centers, to quinones in the photosynthetic chain and possibly in a chloroplast respiratory chain. The immediate electron acceptor for the enzyme in this species is believed to be plastoquinone. Couples the redox reaction to proton translocation, and thus conserves the redox energy in a proton gradient. In Trachelium caeruleum (Blue throatwort), this protein is NAD(P)H-quinone oxidoreductase subunit J, chloroplastic.